Consider the following 257-residue polypeptide: Thiazole synthase (257 aa).

The active-site Schiff-base intermediate with DXP is the K97. 1-deoxy-D-xylulose 5-phosphate is bound by residues G158, 184–185, and 206–207; these read AG and NT.

It belongs to the ThiG family. Homotetramer. Forms heterodimers with either ThiH or ThiS.

It is found in the cytoplasm. It carries out the reaction [ThiS sulfur-carrier protein]-C-terminal-Gly-aminoethanethioate + 2-iminoacetate + 1-deoxy-D-xylulose 5-phosphate = [ThiS sulfur-carrier protein]-C-terminal Gly-Gly + 2-[(2R,5Z)-2-carboxy-4-methylthiazol-5(2H)-ylidene]ethyl phosphate + 2 H2O + H(+). Its pathway is cofactor biosynthesis; thiamine diphosphate biosynthesis. In terms of biological role, catalyzes the rearrangement of 1-deoxy-D-xylulose 5-phosphate (DXP) to produce the thiazole phosphate moiety of thiamine. Sulfur is provided by the thiocarboxylate moiety of the carrier protein ThiS. In vitro, sulfur can be provided by H(2)S. The polypeptide is Thiazole synthase (Phocaeicola vulgatus (strain ATCC 8482 / DSM 1447 / JCM 5826 / CCUG 4940 / NBRC 14291 / NCTC 11154) (Bacteroides vulgatus)).